The sequence spans 353 residues: Nicotinate-nucleotide--dimethylbenzimidazole phosphoribosyltransferase (353 aa).

The active-site Proton acceptor is Glu318.

The protein belongs to the CobT family.

The catalysed reaction is 5,6-dimethylbenzimidazole + nicotinate beta-D-ribonucleotide = alpha-ribazole 5'-phosphate + nicotinate + H(+). It participates in nucleoside biosynthesis; alpha-ribazole biosynthesis; alpha-ribazole from 5,6-dimethylbenzimidazole: step 1/2. Functionally, catalyzes the synthesis of alpha-ribazole-5'-phosphate from nicotinate mononucleotide (NAMN) and 5,6-dimethylbenzimidazole (DMB). The chain is Nicotinate-nucleotide--dimethylbenzimidazole phosphoribosyltransferase from Chloroflexus aggregans (strain MD-66 / DSM 9485).